The chain runs to 497 residues: Ankyrin repeat domain-containing protein 53 (497 aa).

Basic residues predominate over residues 1–10 (MRRPSRRRSK). Positions 1–65 (MRRPSRRRSK…VSSPNSESSQ (65 aa)) are disordered. The span at 12 to 27 (STPPRSHTTPRRTGPS) shows a compositional bias: low complexity. The segment covering 28 to 39 (DSRRRPGTKEQP) has biased composition (basic and acidic residues). 3 ANK repeats span residues 110 to 140 (KGFT…PVDL), 144 to 177 (KGQT…AINS), and 181 to 210 (NGST…NVHA). Positions 239–264 (WKHDKKVLAQEMEKLRTLKEKLTILE) form a coiled coil.

Interacts with PSRC1; recruited by PSRC1 to the spindle during mitosis. In terms of processing, phosphorylated during mitosis.

The protein resides in the cytoplasm. It is found in the cytoskeleton. It localises to the spindle. The protein localises to the spindle pole. In terms of biological role, required for normal progression through mitosis. Involved in chromosome alignment and cytokinesis via regulation of microtubules polymerization. In Mus musculus (Mouse), this protein is Ankyrin repeat domain-containing protein 53 (Ankrd53).